We begin with the raw amino-acid sequence, 566 residues long: Putative sulfite reductase [NADPH] hemoprotein beta-component (566 aa).

[4Fe-4S] cluster is bound by residues C430, C436, C475, and C479. C479 serves as a coordination point for siroheme.

It belongs to the nitrite and sulfite reductase 4Fe-4S domain family. Alpha(8)-beta(8). The alpha component is a flavoprotein, the beta component is a hemoprotein. It depends on siroheme as a cofactor. [4Fe-4S] cluster serves as cofactor.

It carries out the reaction hydrogen sulfide + 3 NADP(+) + 3 H2O = sulfite + 3 NADPH + 4 H(+). It participates in sulfur metabolism; hydrogen sulfide biosynthesis; hydrogen sulfide from sulfite (NADPH route): step 1/1. Functionally, component of the sulfite reductase complex that catalyzes the 6-electron reduction of sulfite to sulfide. This is one of several activities required for the biosynthesis of L-cysteine from sulfate. This Buchnera aphidicola subsp. Schizaphis graminum (strain Sg) protein is Putative sulfite reductase [NADPH] hemoprotein beta-component.